A 351-amino-acid polypeptide reads, in one-letter code: Silk gland factor 3 (351 aa).

Disordered stretches follow at residues 61-88 and 131-154; these read ADPWAMHQHHAHAHQPDVKPPPAPHDHR and SSPRDPLHHHAMERDQPEEDTPTS. The segment covering 135–145 has biased composition (basic and acidic residues); that stretch reads DPLHHHAMERD. The 75-residue stretch at 149–223 folds into the POU-specific domain; the sequence is EDTPTSDDLE…LLQKWLEEAD (75 aa). The segment at residues 241-300 is a DNA-binding region (homeobox); the sequence is KRKKRTSIEVSVKGALEQHFHKQPKPSAQEITSLADSLQLEKEVVRVWFCNRRQKEKRMT. The tract at residues 314 to 351 is disordered; it reads GHAHYGHGDVHGSPLQHSPPGLSPQHGLPQGAHTLAAH.

The protein belongs to the POU transcription factor family. Class-3 subfamily. As to expression, restricted to the middle silk gland.

The protein localises to the nucleus. Its function is as follows. Involved in the transcriptional regulation of sericin-1 gene. The chain is Silk gland factor 3 (SGF3) from Bombyx mori (Silk moth).